We begin with the raw amino-acid sequence, 486 residues long: Methionine aminopeptidase 2-2 (486 aa).

The segment covering 1–10 (MGSKSPEGHR) has biased composition (basic and acidic residues). A disordered region spans residues 1-120 (MGSKSPEGHR…ALPATELKQT (120 aa)). The span at 46–56 (GDDDDDEDAEE) shows a compositional bias: acidic residues. The segment covering 93–108 (KKKKRKKSNKKKKKTK) has biased composition (basic residues). Histidine 238 provides a ligand contact to substrate. Aspartate 259, aspartate 270, and histidine 339 together coordinate a divalent metal cation. Position 347 (histidine 347) interacts with substrate. Glutamate 372 and glutamate 467 together coordinate a divalent metal cation.

It belongs to the peptidase M24A family. Methionine aminopeptidase eukaryotic type 2 subfamily. Co(2+) is required as a cofactor. It depends on Zn(2+) as a cofactor. The cofactor is Mn(2+). Requires Fe(2+) as cofactor.

The protein localises to the cytoplasm. The enzyme catalyses Release of N-terminal amino acids, preferentially methionine, from peptides and arylamides.. Cotranslationally removes the N-terminal methionine from nascent proteins. The N-terminal methionine is often cleaved when the second residue in the primary sequence is small and uncharged (Met-Ala-, Cys, Gly, Pro, Ser, Thr, or Val). This chain is Methionine aminopeptidase 2-2, found in Aspergillus fumigatus (strain ATCC MYA-4609 / CBS 101355 / FGSC A1100 / Af293) (Neosartorya fumigata).